A 349-amino-acid polypeptide reads, in one-letter code: Anthranilate phosphoribosyltransferase (349 aa).

5-phospho-alpha-D-ribose 1-diphosphate is bound by residues Gly-81, 84–85, Thr-89, 91–94, 109–117, and Ala-121; these read GD, NVST, and KHGNRAASS. Gly-81 contacts anthranilate. Mg(2+) is bound at residue Ser-93. Asn-112 is a binding site for anthranilate. Residue Arg-167 coordinates anthranilate. Mg(2+) is bound by residues Asp-226 and Glu-227.

It belongs to the anthranilate phosphoribosyltransferase family. Homodimer. Mg(2+) is required as a cofactor.

The enzyme catalyses N-(5-phospho-beta-D-ribosyl)anthranilate + diphosphate = 5-phospho-alpha-D-ribose 1-diphosphate + anthranilate. It functions in the pathway amino-acid biosynthesis; L-tryptophan biosynthesis; L-tryptophan from chorismate: step 2/5. Its function is as follows. Catalyzes the transfer of the phosphoribosyl group of 5-phosphorylribose-1-pyrophosphate (PRPP) to anthranilate to yield N-(5'-phosphoribosyl)-anthranilate (PRA). In Methylocella silvestris (strain DSM 15510 / CIP 108128 / LMG 27833 / NCIMB 13906 / BL2), this protein is Anthranilate phosphoribosyltransferase.